The following is a 530-amino-acid chain: Ubiquitin carboxyl-terminal hydrolase 17-like protein 1 (530 aa).

One can recognise a USP domain in the interval 80–375 (AGLQNMGNTC…QAYVLFYIQK (296 aa)). The active-site Nucleophile is Cys89. Catalysis depends on His334, which acts as the Proton acceptor. 2 stretches are compositionally biased toward basic and acidic residues: residues 382–392 (SESVSRGREPR) and 398–411 (DTDR…LKRD). Residues 382-411 (SESVSRGREPRALGAEDTDRRAKQGELKRD) are disordered.

This sequence belongs to the peptidase C19 family. USP17 subfamily.

Its subcellular location is the nucleus. It localises to the endoplasmic reticulum. It catalyses the reaction Thiol-dependent hydrolysis of ester, thioester, amide, peptide and isopeptide bonds formed by the C-terminal Gly of ubiquitin (a 76-residue protein attached to proteins as an intracellular targeting signal).. Its function is as follows. Deubiquitinating enzyme that removes conjugated ubiquitin from specific proteins to regulate different cellular processes that may include cell proliferation, progression through the cell cycle, apoptosis, cell migration, and the cellular response to viral infection. The polypeptide is Ubiquitin carboxyl-terminal hydrolase 17-like protein 1 (USP17L1) (Homo sapiens (Human)).